A 240-amino-acid polypeptide reads, in one-letter code: uncharacterized protein (240 aa).

The segment at 93–160 (QEASGCTVGE…AGGGAAASGQ (68 aa)) is disordered. 2 stretches are compositionally biased toward low complexity: residues 110-119 (AQPSQPAQGG) and 129-150 (GGAEEAGGAQASQPAESAPAEN).

This is an uncharacterized protein from Streptomyces viridochromogenes.